A 388-amino-acid polypeptide reads, in one-letter code: Succinate--CoA ligase [ADP-forming] subunit beta (388 aa).

The region spanning 9–236 (KKLFAEHGVP…VAAVDPLEQK (228 aa)) is the ATP-grasp domain. ATP contacts are provided by residues Lys45, 52-54 (GRG), Glu91, Ser94, and Glu99. Asn191 and Asp205 together coordinate Mg(2+). Substrate is bound by residues Asn256 and 318–320 (GIT).

It belongs to the succinate/malate CoA ligase beta subunit family. In terms of assembly, heterotetramer of two alpha and two beta subunits. The cofactor is Mg(2+).

The catalysed reaction is succinate + ATP + CoA = succinyl-CoA + ADP + phosphate. It carries out the reaction GTP + succinate + CoA = succinyl-CoA + GDP + phosphate. It participates in carbohydrate metabolism; tricarboxylic acid cycle; succinate from succinyl-CoA (ligase route): step 1/1. In terms of biological role, succinyl-CoA synthetase functions in the citric acid cycle (TCA), coupling the hydrolysis of succinyl-CoA to the synthesis of either ATP or GTP and thus represents the only step of substrate-level phosphorylation in the TCA. The beta subunit provides nucleotide specificity of the enzyme and binds the substrate succinate, while the binding sites for coenzyme A and phosphate are found in the alpha subunit. This Parafrankia sp. (strain EAN1pec) protein is Succinate--CoA ligase [ADP-forming] subunit beta.